The sequence spans 344 residues: uncharacterized protein (344 aa).

The HTH araC/xylS-type domain maps to 242–343 (RGITALVRSK…GVAPSEYSRR (102 aa)). 2 consecutive DNA-binding regions (H-T-H motif) follow at residues 263–284 (TDVA…AEEG) and 310–333 (VQQV…KRWY).

This is an uncharacterized protein from Mycobacterium bovis (strain ATCC BAA-935 / AF2122/97).